A 100-amino-acid polypeptide reads, in one-letter code: Urease subunit gamma (100 aa).

Belongs to the urease gamma subunit family. In terms of assembly, heterotrimer of UreA (gamma), UreB (beta) and UreC (alpha) subunits. Three heterotrimers associate to form the active enzyme.

It is found in the cytoplasm. It carries out the reaction urea + 2 H2O + H(+) = hydrogencarbonate + 2 NH4(+). It functions in the pathway nitrogen metabolism; urea degradation; CO(2) and NH(3) from urea (urease route): step 1/1. This chain is Urease subunit gamma, found in Escherichia coli.